The sequence spans 466 residues: Ribulose bisphosphate carboxylase large chain (466 aa).

Position 5 is an N6,N6,N6-trimethyllysine (lysine 5). Substrate is bound by residues asparagine 114 and threonine 164. The active-site Proton acceptor is lysine 166. Lysine 168 lines the substrate pocket. Positions 192, 194, and 195 each coordinate Mg(2+). Lysine 192 is modified (N6-carboxylysine). The active-site Proton acceptor is histidine 285. Substrate is bound by residues arginine 286, histidine 318, and serine 370.

This sequence belongs to the RuBisCO large chain family. Type I subfamily. As to quaternary structure, heterohexadecamer of 8 large chains and 8 small chains; disulfide-linked. The disulfide link is formed within the large subunit homodimers. Requires Mg(2+) as cofactor. The disulfide bond which can form in the large chain dimeric partners within the hexadecamer appears to be associated with oxidative stress and protein turnover.

It localises to the plastid. It is found in the chloroplast. The catalysed reaction is 2 (2R)-3-phosphoglycerate + 2 H(+) = D-ribulose 1,5-bisphosphate + CO2 + H2O. The enzyme catalyses D-ribulose 1,5-bisphosphate + O2 = 2-phosphoglycolate + (2R)-3-phosphoglycerate + 2 H(+). Functionally, ruBisCO catalyzes two reactions: the carboxylation of D-ribulose 1,5-bisphosphate, the primary event in carbon dioxide fixation, as well as the oxidative fragmentation of the pentose substrate in the photorespiration process. Both reactions occur simultaneously and in competition at the same active site. This Isophysis tasmanica protein is Ribulose bisphosphate carboxylase large chain.